The primary structure comprises 102 residues: Aspartyl/glutamyl-tRNA(Asn/Gln) amidotransferase subunit C (102 aa).

Belongs to the GatC family. In terms of assembly, heterotrimer of A, B and C subunits.

The enzyme catalyses L-glutamyl-tRNA(Gln) + L-glutamine + ATP + H2O = L-glutaminyl-tRNA(Gln) + L-glutamate + ADP + phosphate + H(+). It catalyses the reaction L-aspartyl-tRNA(Asn) + L-glutamine + ATP + H2O = L-asparaginyl-tRNA(Asn) + L-glutamate + ADP + phosphate + 2 H(+). Functionally, allows the formation of correctly charged Asn-tRNA(Asn) or Gln-tRNA(Gln) through the transamidation of misacylated Asp-tRNA(Asn) or Glu-tRNA(Gln) in organisms which lack either or both of asparaginyl-tRNA or glutaminyl-tRNA synthetases. The reaction takes place in the presence of glutamine and ATP through an activated phospho-Asp-tRNA(Asn) or phospho-Glu-tRNA(Gln). This chain is Aspartyl/glutamyl-tRNA(Asn/Gln) amidotransferase subunit C, found in Bordetella parapertussis (strain 12822 / ATCC BAA-587 / NCTC 13253).